Consider the following 425-residue polypeptide: Serine--tRNA ligase (425 aa).

Position 232–234 (232–234 (TSE)) interacts with L-serine. Residues 263–265 (RRE) and V279 contribute to the ATP site. E286 is an L-serine binding site. 350–353 (EAVS) is an ATP binding site. Residue T387 coordinates L-serine.

This sequence belongs to the class-II aminoacyl-tRNA synthetase family. Type-1 seryl-tRNA synthetase subfamily. As to quaternary structure, homodimer. The tRNA molecule binds across the dimer.

The protein resides in the cytoplasm. It carries out the reaction tRNA(Ser) + L-serine + ATP = L-seryl-tRNA(Ser) + AMP + diphosphate + H(+). The enzyme catalyses tRNA(Sec) + L-serine + ATP = L-seryl-tRNA(Sec) + AMP + diphosphate + H(+). It functions in the pathway aminoacyl-tRNA biosynthesis; selenocysteinyl-tRNA(Sec) biosynthesis; L-seryl-tRNA(Sec) from L-serine and tRNA(Sec): step 1/1. Functionally, catalyzes the attachment of serine to tRNA(Ser). Is also able to aminoacylate tRNA(Sec) with serine, to form the misacylated tRNA L-seryl-tRNA(Sec), which will be further converted into selenocysteinyl-tRNA(Sec). The chain is Serine--tRNA ligase from Methanoculleus marisnigri (strain ATCC 35101 / DSM 1498 / JR1).